A 543-amino-acid polypeptide reads, in one-letter code: MTRYIFVTGGVVSSLGKGIASASLAAILEARGLKVTMLKLDPYINVDPGTMSPFQHGEVFVTHDGAETDLDLGHYERFIRTTMTQNNNFTTGRVYEHVLRKERRGDYLGATIQVIPHITDEIKRRIIKGAGDADVALVEIGGTVGDIESQPFLEAIRQLRFEVGARRAMLMHLTLVPYIATAGETKTKPTQHSVKELRSIGLQPDVLVCRSDHPIDISSRRKIAQFTNVEERAVIALEDADTIYKIPGILHSQGLDDFVVERFGLQCGGADLSEWDKVVDAKLNPEHEVTIAMVGKYMELLDAYKSLIEAMSHAGITNRTKVNLRYIDSEDIENQGTGLLEGVDAILVPGGFGLRGVEGKITAVQFARENKVPYLGICLGMQVAVIEFARNVLGWKDANSTEFDRTSAHAVVGLITEWEDATGAVETRTESSDLGGTMRLGAQDCQLEAGSLVHDCYRKDVIVERHRHRYEVNNNLLPQLIEAGLKISGRSGDGALVEVVEAPDHPWFVACQFHPEFTSTPRDGHPLFSGFVKAALAQHQKNS.

Residues 1-265 (MTRYIFVTGG…DDFVVERFGL (265 aa)) form an amidoligase domain region. Ser13 is a binding site for CTP. Ser13 is a binding site for UTP. ATP-binding positions include 14 to 19 (SLGKGI) and Asp71. 2 residues coordinate Mg(2+): Asp71 and Glu139. CTP-binding positions include 146-148 (DIE), 186-191 (KTKPTQ), and Lys222. Residues 186–191 (KTKPTQ) and Lys222 each bind UTP. Positions 290-541 (TIAMVGKYME…VKAALAQHQK (252 aa)) constitute a Glutamine amidotransferase type-1 domain. Residue Gly351 participates in L-glutamine binding. Cys378 acts as the Nucleophile; for glutamine hydrolysis in catalysis. Residues 379–382 (LGMQ), Glu402, and Arg469 each bind L-glutamine. Active-site residues include His514 and Glu516.

Belongs to the CTP synthase family. In terms of assembly, homotetramer.

The catalysed reaction is UTP + L-glutamine + ATP + H2O = CTP + L-glutamate + ADP + phosphate + 2 H(+). It carries out the reaction L-glutamine + H2O = L-glutamate + NH4(+). It catalyses the reaction UTP + NH4(+) + ATP = CTP + ADP + phosphate + 2 H(+). The protein operates within pyrimidine metabolism; CTP biosynthesis via de novo pathway; CTP from UDP: step 2/2. Allosterically activated by GTP, when glutamine is the substrate; GTP has no effect on the reaction when ammonia is the substrate. The allosteric effector GTP functions by stabilizing the protein conformation that binds the tetrahedral intermediate(s) formed during glutamine hydrolysis. Inhibited by the product CTP, via allosteric rather than competitive inhibition. Functionally, catalyzes the ATP-dependent amination of UTP to CTP with either L-glutamine or ammonia as the source of nitrogen. Regulates intracellular CTP levels through interactions with the four ribonucleotide triphosphates. The protein is CTP synthase of Pseudomonas syringae pv. tomato (strain ATCC BAA-871 / DC3000).